A 401-amino-acid polypeptide reads, in one-letter code: Phosphoglycerate kinase (401 aa).

Substrate contacts are provided by residues 20–22 (DFN), R35, 58–61 (HLGR), R117, and R154. ATP is bound by residues K204, G298, E329, and 358–361 (GGDS).

Belongs to the phosphoglycerate kinase family. As to quaternary structure, monomer.

The protein resides in the cytoplasm. It catalyses the reaction (2R)-3-phosphoglycerate + ATP = (2R)-3-phospho-glyceroyl phosphate + ADP. It functions in the pathway carbohydrate degradation; glycolysis; pyruvate from D-glyceraldehyde 3-phosphate: step 2/5. The chain is Phosphoglycerate kinase from Bifidobacterium adolescentis (strain ATCC 15703 / DSM 20083 / NCTC 11814 / E194a).